The chain runs to 338 residues: Aspartate carbamoyltransferase catalytic subunit (338 aa).

2 residues coordinate carbamoyl phosphate: Arg-71 and Thr-72. Lys-99 provides a ligand contact to L-aspartate. Residues Arg-121, His-151, and Gln-154 each contribute to the carbamoyl phosphate site. Arg-184 and Arg-239 together coordinate L-aspartate. Positions 280 and 281 each coordinate carbamoyl phosphate.

This sequence belongs to the aspartate/ornithine carbamoyltransferase superfamily. ATCase family. Heterododecamer (2C3:3R2) of six catalytic PyrB chains organized as two trimers (C3), and six regulatory PyrI chains organized as three dimers (R2).

It catalyses the reaction carbamoyl phosphate + L-aspartate = N-carbamoyl-L-aspartate + phosphate + H(+). Its pathway is pyrimidine metabolism; UMP biosynthesis via de novo pathway; (S)-dihydroorotate from bicarbonate: step 2/3. Its function is as follows. Catalyzes the condensation of carbamoyl phosphate and aspartate to form carbamoyl aspartate and inorganic phosphate, the committed step in the de novo pyrimidine nucleotide biosynthesis pathway. The sequence is that of Aspartate carbamoyltransferase catalytic subunit from Stutzerimonas stutzeri (strain A1501) (Pseudomonas stutzeri).